The primary structure comprises 600 residues: UPF0588 membrane protein C20F10.02c (600 aa).

2 helical membrane passes run 409-429 and 437-457; these read LSAT…TSLV and YHWL…SVLI.

Belongs to the UPF0588 family.

Its subcellular location is the membrane. The protein is UPF0588 membrane protein C20F10.02c of Schizosaccharomyces pombe (strain 972 / ATCC 24843) (Fission yeast).